We begin with the raw amino-acid sequence, 119 residues long: Beta-2-microglobulin (119 aa).

The signal sequence occupies residues 1–20; that stretch reads MARSVTVIFLVLVSLAVVLA. The Ig-like C1-type domain occupies 25 to 114; it reads PQIQVYSRHP…VTLKEPKTVT (90 aa). The cysteines at positions 45 and 100 are disulfide-linked.

This sequence belongs to the beta-2-microglobulin family. In terms of assembly, heterodimer of an alpha chain and a beta chain. Beta-2-microglobulin is the beta-chain of major histocompatibility complex class I molecules. Forms a heterotrimer with MR1 and a metabolite antigen.

The protein resides in the secreted. Its function is as follows. Component of the class I major histocompatibility complex (MHC). Involved in the presentation of peptide antigens to the immune system. The protein is Beta-2-microglobulin (B2m) of Rattus norvegicus (Rat).